The sequence spans 380 residues: Crotonobetainyl-CoA reductase (380 aa).

The protein belongs to the acyl-CoA dehydrogenase family. As to quaternary structure, homotetramer. The cofactor is FAD.

Its subcellular location is the cytoplasm. The catalysed reaction is 4-(trimethylamino)butanoyl-CoA + oxidized [electron-transfer flavoprotein] + H(+) = crotonobetainyl-CoA + reduced [electron-transfer flavoprotein]. It participates in amine and polyamine metabolism; carnitine metabolism. In terms of biological role, catalyzes the reduction of crotonobetainyl-CoA to gamma-butyrobetainyl-CoA. The chain is Crotonobetainyl-CoA reductase from Escherichia coli O6:K15:H31 (strain 536 / UPEC).